The chain runs to 215 residues: Thiamine-phosphate synthase (215 aa).

Residues 37–41 (QLRIK) and asparagine 69 contribute to the 4-amino-2-methyl-5-(diphosphooxymethyl)pyrimidine site. Aspartate 70 and aspartate 89 together coordinate Mg(2+). 4-amino-2-methyl-5-(diphosphooxymethyl)pyrimidine is bound at residue serine 108. Residue 134-136 (TQT) participates in 2-[(2R,5Z)-2-carboxy-4-methylthiazol-5(2H)-ylidene]ethyl phosphate binding. Position 137 (lysine 137) interacts with 4-amino-2-methyl-5-(diphosphooxymethyl)pyrimidine. 2-[(2R,5Z)-2-carboxy-4-methylthiazol-5(2H)-ylidene]ethyl phosphate is bound by residues glycine 166 and 186–187 (VS).

Belongs to the thiamine-phosphate synthase family. Mg(2+) is required as a cofactor.

It carries out the reaction 2-[(2R,5Z)-2-carboxy-4-methylthiazol-5(2H)-ylidene]ethyl phosphate + 4-amino-2-methyl-5-(diphosphooxymethyl)pyrimidine + 2 H(+) = thiamine phosphate + CO2 + diphosphate. The catalysed reaction is 2-(2-carboxy-4-methylthiazol-5-yl)ethyl phosphate + 4-amino-2-methyl-5-(diphosphooxymethyl)pyrimidine + 2 H(+) = thiamine phosphate + CO2 + diphosphate. The enzyme catalyses 4-methyl-5-(2-phosphooxyethyl)-thiazole + 4-amino-2-methyl-5-(diphosphooxymethyl)pyrimidine + H(+) = thiamine phosphate + diphosphate. The protein operates within cofactor biosynthesis; thiamine diphosphate biosynthesis; thiamine phosphate from 4-amino-2-methyl-5-diphosphomethylpyrimidine and 4-methyl-5-(2-phosphoethyl)-thiazole: step 1/1. In terms of biological role, condenses 4-methyl-5-(beta-hydroxyethyl)thiazole monophosphate (THZ-P) and 2-methyl-4-amino-5-hydroxymethyl pyrimidine pyrophosphate (HMP-PP) to form thiamine monophosphate (TMP). This Yersinia pseudotuberculosis serotype I (strain IP32953) protein is Thiamine-phosphate synthase.